A 479-amino-acid chain; its full sequence is Probable aspartic-type endopeptidase OPSB (479 aa).

Residues Met1–Ala19 form the signal peptide. The Peptidase A1 domain maps to Ser58–Ala393. Asn68 is a glycosylation site (N-linked (GlcNAc...) asparagine). The active site involves Asp76. A glycan (N-linked (GlcNAc...) asparagine) is linked at Asn121. Asp275 is a catalytic residue. N-linked (GlcNAc...) asparagine glycosylation occurs at Asn398. Positions Leu435 to Pro454 are disordered. A lipid anchor (GPI-anchor amidated glycine) is attached at Gly451. The propeptide at Ala452–Met479 is removed in mature form.

The protein belongs to the peptidase A1 family.

The protein localises to the cell membrane. Its function is as follows. Probable GPI-anchored aspartic-type endopeptidase which contributes to virulence. The protein is Probable aspartic-type endopeptidase OPSB (OPSB) of Arthroderma otae (strain ATCC MYA-4605 / CBS 113480) (Microsporum canis).